The primary structure comprises 120 residues: Large ribosomal subunit protein bL17 (120 aa).

The protein belongs to the bacterial ribosomal protein bL17 family. As to quaternary structure, part of the 50S ribosomal subunit. Contacts protein L32.

In Anoxybacillus flavithermus (strain DSM 21510 / WK1), this protein is Large ribosomal subunit protein bL17.